The primary structure comprises 197 residues: Small ribosomal subunit protein uS4B (197 aa).

The S4 RNA-binding domain occupies 88 to 150 (SRLDNMVYRM…SRKTEMFVNN (63 aa)).

Belongs to the universal ribosomal protein uS4 family. In terms of assembly, part of the 30S ribosomal subunit. Contacts protein S5. The interaction surface between S4 and S5 is involved in control of translational fidelity.

In terms of biological role, one of the primary rRNA binding proteins, it binds directly to 16S rRNA where it nucleates assembly of the body of the 30S subunit. Its function is as follows. With S5 and S12 plays an important role in translational accuracy. The protein is Small ribosomal subunit protein uS4B of Clostridium perfringens (strain SM101 / Type A).